The sequence spans 192 residues: MENSSLTLDDFLSRFQLLRPQVNGETLNRRQAAVLIPVVRRARPGLLLTQRSARLRKHAGQVAFPGGAVDSSDASLIAAALREAQEEVAIPPESVEVIGVLPPVDSVTGFQVTPVVGIIPPNLHYHASEDEVASVFEMPLSEALRLGRYHPLDIYRRGDSHRVWLSWYEHYFVWGMTAGIIRELALQIGVRP.

In terms of domain architecture, Nudix hydrolase spans 29–160 (RRQAAVLIPV…PLDIYRRGDS (132 aa)). Residues 67–89 (GAVDSSDASLIAAALREAQEEVA) carry the Nudix box motif. Residues E83 and E87 each coordinate Mg(2+).

The protein belongs to the Nudix hydrolase family. PCD1 subfamily. It depends on Mn(2+) as a cofactor. The cofactor is Mg(2+).

In terms of biological role, probably mediates the hydrolysis of some nucleoside diphosphate derivatives. This is an uncharacterized protein from Citrobacter koseri (strain ATCC BAA-895 / CDC 4225-83 / SGSC4696).